Reading from the N-terminus, the 396-residue chain is Lipid-A-disaccharide synthase (396 aa).

Belongs to the LpxB family.

It catalyses the reaction a lipid X + a UDP-2-N,3-O-bis[(3R)-3-hydroxyacyl]-alpha-D-glucosamine = a lipid A disaccharide + UDP + H(+). Its pathway is bacterial outer membrane biogenesis; LPS lipid A biosynthesis. Functionally, condensation of UDP-2,3-diacylglucosamine and 2,3-diacylglucosamine-1-phosphate to form lipid A disaccharide, a precursor of lipid A, a phosphorylated glycolipid that anchors the lipopolysaccharide to the outer membrane of the cell. This Rhodopseudomonas palustris (strain BisB18) protein is Lipid-A-disaccharide synthase.